The primary structure comprises 406 residues: Putative competence-damage inducible protein (406 aa).

This sequence belongs to the CinA family.

The sequence is that of Putative competence-damage inducible protein from Natranaerobius thermophilus (strain ATCC BAA-1301 / DSM 18059 / JW/NM-WN-LF).